The following is a 281-amino-acid chain: Large ribosomal subunit protein uL2 (281 aa).

The tract at residues 210-281 (RTRYAGQRPH…RGRKRGPHTR (72 aa)) is disordered. Positions 254 to 281 (TVGKKTRSHKARSNKFIVRGRKRGPHTR) are enriched in basic residues.

This sequence belongs to the universal ribosomal protein uL2 family. As to quaternary structure, part of the 50S ribosomal subunit. Forms a bridge to the 30S subunit in the 70S ribosome.

One of the primary rRNA binding proteins. Required for association of the 30S and 50S subunits to form the 70S ribosome, for tRNA binding and peptide bond formation. It has been suggested to have peptidyltransferase activity; this is somewhat controversial. Makes several contacts with the 16S rRNA in the 70S ribosome. This chain is Large ribosomal subunit protein uL2, found in Limosilactobacillus reuteri subsp. reuteri (strain JCM 1112) (Lactobacillus reuteri).